A 195-amino-acid chain; its full sequence is UPF0215 protein TGAM_0348 (195 aa).

The protein belongs to the UPF0215 family.

In Thermococcus gammatolerans (strain DSM 15229 / JCM 11827 / EJ3), this protein is UPF0215 protein TGAM_0348.